A 982-amino-acid chain; its full sequence is Envelope glycoprotein gp160 (982 aa).

Residues 1 to 106 (MASKESKPSR…CLMWEVRKGN (106 aa)) form the signal peptide. The Extracellular segment spans residues 107–831 (QCQAEEVIAL…WSSWFSWLKY (725 aa)). N140, N161, N206, N258, N298, N364, N381, N387, N403, N414, N435, N439, N470, N475, N481, N491, N501, N515, N527, N537, N542, N543, and N568 each carry an N-linked (GlcNAc...) asparagine; by host glycan. Residues 657-677 (GIGLVIVLAIMAIIAAAGAGL) are fusion peptide. Residues 689–738 (RTAVQSLANATAAQQEVLEASYAMVQHIAKGIRILEARVARVEALVDMMV) adopt a coiled-coil conformation. The N-linked (GlcNAc...) asparagine; by host glycan is linked to N697. Residues 723 to 738 (LEARVARVEALVDMMV) form an immunosuppression region. Residues N764, N771, N787, and N821 are each glycosylated (N-linked (GlcNAc...) asparagine; by host). The stretch at 779–814 (EEIEQHEGNLSLLLREAALQVHIAQRDARRIPDAWK) forms a coiled coil. A helical membrane pass occupies residues 832–852 (IPWIIMGIVGLMCFRILMCVI). Topologically, residues 853 to 982 (SMCLQAYKQV…PTLENDYVEL (130 aa)) are cytoplasmic. The S-palmitoyl cysteine; by host moiety is linked to residue C855.

As to quaternary structure, the mature envelope protein (Env) consists of a trimer of SU-TM heterodimers attached by noncovalent interactions or by a labile interchain disulfide bond. Post-translationally, specific enzymatic cleavages in vivo yield mature proteins. Envelope glycoproteins are synthesized as an inactive precursor that is N-glycosylated and processed likely by host cell furin or by a furin-like protease in the Golgi to yield the mature SU and TM proteins. The cleavage site between SU and TM requires the minimal sequence [KR]-X-[KR]-R. The transmembrane protein is palmitoylated.

The protein resides in the virion membrane. It is found in the host cell membrane. Its function is as follows. The surface protein (SU) attaches the virus to the host cell by binding to its receptor. This interaction triggers the refolding of the transmembrane protein (TM) and is thought to activate its fusogenic potential by unmasking its fusion peptide. Fusion occurs at the host cell plasma membrane. Functionally, the transmembrane protein (TM) acts as a class I viral fusion protein. Under the current model, the protein has at least 3 conformational states: pre-fusion native state, pre-hairpin intermediate state, and post-fusion hairpin state. During viral and target cell membrane fusion, the coiled coil regions (heptad repeats) assume a trimer-of-hairpins structure, positioning the fusion peptide in close proximity to the C-terminal region of the ectodomain. The formation of this structure appears to drive apposition and subsequent fusion of viral and target cell membranes. Membranes fusion leads to delivery of the nucleocapsid into the cytoplasm. The sequence is that of Envelope glycoprotein gp160 (env) from Maedi visna virus (strain 1514) (MVV).